A 538-amino-acid polypeptide reads, in one-letter code: Chaperonin GroEL (538 aa).

Residues 29 to 32, 86 to 90, Gly413, 477 to 479, and Asp493 contribute to the ATP site; these read TLGP, DGTTT, and NAA.

The protein belongs to the chaperonin (HSP60) family. Forms a cylinder of 14 subunits composed of two heptameric rings stacked back-to-back. Interacts with the co-chaperonin GroES.

It localises to the cytoplasm. The catalysed reaction is ATP + H2O + a folded polypeptide = ADP + phosphate + an unfolded polypeptide.. Functionally, together with its co-chaperonin GroES, plays an essential role in assisting protein folding. The GroEL-GroES system forms a nano-cage that allows encapsulation of the non-native substrate proteins and provides a physical environment optimized to promote and accelerate protein folding. The chain is Chaperonin GroEL from Scardovia inopinata (Bifidobacterium inopinatum).